The sequence spans 417 residues: Serine--tRNA ligase (417 aa).

Position 225-227 (225-227 (TLE)) interacts with L-serine. 256-258 (RQE) contributes to the ATP binding site. An L-serine-binding site is contributed by E279. 343-346 (EVSS) contacts ATP. T379 serves as a coordination point for L-serine.

It belongs to the class-II aminoacyl-tRNA synthetase family. Type-1 seryl-tRNA synthetase subfamily. In terms of assembly, homodimer. The tRNA molecule binds across the dimer.

It localises to the cytoplasm. It carries out the reaction tRNA(Ser) + L-serine + ATP = L-seryl-tRNA(Ser) + AMP + diphosphate + H(+). The enzyme catalyses tRNA(Sec) + L-serine + ATP = L-seryl-tRNA(Sec) + AMP + diphosphate + H(+). Its pathway is aminoacyl-tRNA biosynthesis; selenocysteinyl-tRNA(Sec) biosynthesis; L-seryl-tRNA(Sec) from L-serine and tRNA(Sec): step 1/1. Catalyzes the attachment of serine to tRNA(Ser). Is also able to aminoacylate tRNA(Sec) with serine, to form the misacylated tRNA L-seryl-tRNA(Sec), which will be further converted into selenocysteinyl-tRNA(Sec). The protein is Serine--tRNA ligase of Mycoplasma genitalium (strain ATCC 33530 / DSM 19775 / NCTC 10195 / G37) (Mycoplasmoides genitalium).